An 859-amino-acid chain; its full sequence is Transforming growth factor-beta receptor-associated protein 1 (859 aa).

Residues 24-297 enclose the CNH domain; it reads RGLLECVECC…HILQDFEGRV (274 aa). The stretch at 563–727 is one CHCR repeat; that stretch reads KRPLDEQQSG…LLAVYLGPGP (165 aa).

The protein belongs to the TRAP1 family. In terms of assembly, interacts with TGFBR2 and ACVR2B; in the absence of ligand stimulation. Interacts with TGFBR1, ACVRL1, BMPR1A and ACVR1B; in the absence of ligand stimulation and to a less extent. Interacts with SMAD4; the interaction seems to be mutually exclusive with the interaction of SMAD4 and phosphorylated SMAD2. May interact with ALOX5. Interacts with RAB5C. Interacts with VPS8, VPS11 and VPS16. Component of the putative class C core vacuole/endosome tethering (CORVET) complex; the core of which composed of the class C Vps proteins VPS11, VPS16, VPS18 and VPS33A, is associated with VPS8 and TGFBRAP1.

The protein resides in the cytoplasm. The protein localises to the early endosome. Functionally, plays a role in the TGF-beta/activin signaling pathway. It associates with inactive heteromeric TGF-beta and activin receptor complexes, mainly through the type II receptor, and is released upon activation of signaling. May recruit SMAD4 to the vicinity of the receptor complex and facilitate its interaction with receptor-regulated Smads, such as SMAD2. Plays a role in vesicle-mediated protein trafficking of the endocytic membrane transport pathway. Believed to act as a component of the putative CORVET endosomal tethering complexes which is proposed to be involved in the Rab5-to-Rab7 endosome conversion probably implicating MON1A/B, and via binding SNAREs and SNARE complexes to mediate tethering and docking events during SNARE-mediated membrane fusion. The CORVET complex is proposed to function as a Rab5 effector to mediate early endosome fusion probably in specific endosome subpopulations. Functions predominantly in APPL1-containing endosomes and in degradative but not recycling trafficking of endocytosed cargo. In Bos taurus (Bovine), this protein is Transforming growth factor-beta receptor-associated protein 1 (TGFBRAP1).